The following is a 391-amino-acid chain: Immunoglobulin heavy constant alpha 2 (391 aa).

The Extracellular portion of the chain corresponds to 1–357 (ASPTSPKVFP…TPGANLWPTT (357 aa)). 3 Ig-like domains span residues 6 to 98 (PKVF…QDVT), 112 to 207 (PRLS…ANIT), and 215 to 317 (PEVH…KTID). The cysteines at positions 26 and 85 are disulfide-linked. N47 is a glycosylation site (N-linked (GlcNAc...) asparagine). An N-linked (GlcNAc...) (complex) asparagine glycan is attached at N92. 2 disulfide bridges follow: C110/C167 and C134/C191. N131 carries an N-linked (GlcNAc...) asparagine glycan. N-linked (GlcNAc...) (complex) asparagine glycosylation is present at N205. Cysteines 237 and 300 form a disulfide. An N-linked (GlcNAc...) (complex) asparagine glycan is attached at D327. A helical membrane pass occupies residues 358–379 (ITFLTLFLLSLFYSTALTVTSV). At 380-391 (RGPSGKREGPQY) the chain is on the cytoplasmic side.

As to quaternary structure, immunoglobulins are composed of two identical heavy chains and two identical light chains; disulfide-linked. Monomeric or polymeric. Part of the secretory IgA (sIgA) complex that consists of two, four or five IgA monomers, and two additional non-Ig polypeptides, namely the JCHAIN and the secretory component (the proteolytic product of PIGR).

It localises to the secreted. The protein resides in the cell membrane. In terms of biological role, constant region of immunoglobulin heavy chains. Immunoglobulins, also known as antibodies, are membrane-bound or secreted glycoproteins produced by B lymphocytes. In the recognition phase of humoral immunity, the membrane-bound immunoglobulins serve as receptors which, upon binding of a specific antigen, trigger the clonal expansion and differentiation of B lymphocytes into immunoglobulins-secreting plasma cells. Secreted immunoglobulins mediate the effector phase of humoral immunity, which results in the elimination of bound antigens. The antigen binding site is formed by the variable domain of one heavy chain, together with that of its associated light chain. Thus, each immunoglobulin has two antigen binding sites with remarkable affinity for a particular antigen. The variable domains are assembled by a process called V-(D)-J rearrangement and can then be subjected to somatic hypermutations which, after exposure to antigen and selection, allow affinity maturation for a particular antigen. Ig alpha is the major immunoglobulin class in body secretions. This is Immunoglobulin heavy constant alpha 2 from Homo sapiens (Human).